Consider the following 142-residue polypeptide: Large ribosomal subunit protein uL11 (142 aa).

Belongs to the universal ribosomal protein uL11 family. Part of the ribosomal stalk of the 50S ribosomal subunit. Interacts with L10 and the large rRNA to form the base of the stalk. L10 forms an elongated spine to which L12 dimers bind in a sequential fashion forming a multimeric L10(L12)X complex. One or more lysine residues are methylated.

Functionally, forms part of the ribosomal stalk which helps the ribosome interact with GTP-bound translation factors. This chain is Large ribosomal subunit protein uL11, found in Methylocella silvestris (strain DSM 15510 / CIP 108128 / LMG 27833 / NCIMB 13906 / BL2).